The chain runs to 310 residues: CRAL-TRIO domain-containing protein YKL091C (310 aa).

In terms of domain architecture, CRAL-TRIO spans 101–274; that stretch reads ERIKLAKMYP…KYGGTSVLHN (174 aa).

This chain is CRAL-TRIO domain-containing protein YKL091C, found in Saccharomyces cerevisiae (strain ATCC 204508 / S288c) (Baker's yeast).